The following is a 103-amino-acid chain: Small ribosomal subunit protein uS10 (103 aa).

The protein belongs to the universal ribosomal protein uS10 family. Part of the 30S ribosomal subunit.

Its function is as follows. Involved in the binding of tRNA to the ribosomes. The polypeptide is Small ribosomal subunit protein uS10 (Escherichia coli O127:H6 (strain E2348/69 / EPEC)).